A 539-amino-acid polypeptide reads, in one-letter code: Protein ENTREP2 (539 aa).

The next 4 helical transmembrane spans lie at 31–51 (IVLA…AVSF), 65–85 (SCPF…VVSW), 89–109 (LSLV…LNLA), and 176–196 (LLFS…LATA). The disordered stretch occupies residues 301–481 (VVGQPPASQV…TSKERPRSLV (181 aa)). Residues 306–331 (PASQVTSIGQQVAESSSGDPNTSAGF) show a composition bias toward polar residues. Positions 347–365 (GTATPGSSPSPDGPVGAPA) are enriched in low complexity. Residues 395 to 408 (SRSTSDPTLCTSSM) are compositionally biased toward polar residues.

The protein belongs to the ENTREP family.

It is found in the membrane. This chain is Protein ENTREP2, found in Homo sapiens (Human).